The following is a 387-amino-acid chain: Eukaryotic translation initiation factor 3 subunit M (387 aa).

Positions 181–340 (LSSKVMIELL…RKVHISSTMH (160 aa)) constitute a PCI domain.

Belongs to the eIF-3 subunit M family. As to quaternary structure, component of the eukaryotic translation initiation factor 3 (eIF-3) complex. The eIF-3 complex interacts with pix.

It localises to the cytoplasm. Its subcellular location is the golgi apparatus. Component of the eukaryotic translation initiation factor 3 (eIF-3) complex, which is involved in protein synthesis of a specialized repertoire of mRNAs and, together with other initiation factors, stimulates binding of mRNA and methionyl-tRNAi to the 40S ribosome. The eIF-3 complex specifically targets and initiates translation of a subset of mRNAs involved in cell proliferation. The chain is Eukaryotic translation initiation factor 3 subunit M from Drosophila persimilis (Fruit fly).